The sequence spans 353 residues: N-formyl peptide receptor 3 (353 aa).

Residues 1 to 27 lie on the Extracellular side of the membrane; that stretch reads METNFSIPLNETEEVLPEPAGHTVLWI. 2 N-linked (GlcNAc...) asparagine glycosylation sites follow: Asn-4 and Asn-10. The chain crosses the membrane as a helical span at residues 28–50; sequence FSLLVHGVTFVFGVLGNGLVIWV. The Cytoplasmic segment spans residues 51–61; the sequence is AGFRMTRTVNT. Residues 62-83 form a helical membrane-spanning segment; the sequence is ICYLNLALADFSFSAILPFRMV. Over 84-100 the chain is Extracellular; the sequence is SVAMREKWPFGSFLCKL. The cysteines at positions 98 and 176 are disulfide-linked. A helical transmembrane segment spans residues 101–121; it reads VHVMIDINLFVSVYLITIIAL. At 122 to 140 the chain is on the cytoplasmic side; the sequence is DRCICVLHPAWAQNHRTMS. A helical transmembrane segment spans residues 141-162; that stretch reads LAKRVMTGLWIFTIVLTLPNFI. Residues 163–205 lie on the Extracellular side of the membrane; it reads FWTTISTTNGDTYCIFNFAFWGDTAVERLNVFITMAKVFLILH. A helical transmembrane segment spans residues 206 to 226; sequence FIIGFSVPMSIITVCYGIIAA. The Cytoplasmic segment spans residues 227–242; sequence KIHRNHMIKSSRPLRV. Residues 243-266 form a helical membrane-spanning segment; it reads FAAVVASFFICWFPYELIGILMAV. At 267–286 the chain is on the extracellular side; that stretch reads WLKEMLLNGKYKIILVLINP. The helical transmembrane segment at 287–306 threads the bilayer; it reads TSSLAFFNSCLNPILYVFMG. At 307-353 the chain is on the cytoplasmic side; the sequence is RNFQERLIRSLPTSLERALTEVPDSAQTSNTDTTSASPPEETELQAM. Positions 327 to 353 are disordered; that stretch reads EVPDSAQTSNTDTTSASPPEETELQAM. Polar residues predominate over residues 331–343; sequence SAQTSNTDTTSAS.

Belongs to the G-protein coupled receptor 1 family. As to expression, detected in various tissues with highest expression in lung.

The protein localises to the cell membrane. Low affinity receptor for N-formyl-methionyl peptides, which are powerful neutrophils chemotactic factors. Binding of FMLP to the receptor causes activation of neutrophils. This response is mediated via a G-protein that activates a phosphatidylinositol-calcium second messenger system. Acts as a receptor for humanin. The polypeptide is N-formyl peptide receptor 3 (FPR3) (Homo sapiens (Human)).